A 349-amino-acid polypeptide reads, in one-letter code: Trans-enoyl reductase phmE (349 aa).

C55 to K58 lines the NADP(+) pocket. T143–L150 contributes to the substrate binding site. NADP(+) contacts are provided by residues S182–N185, Y200, and L247–E248. G267–L271 is a binding site for substrate. Residue V336–S337 participates in NADP(+) binding.

The protein belongs to the zinc-containing alcohol dehydrogenase family. As to quaternary structure, monomer.

Its pathway is mycotoxin biosynthesis. Functionally, trans-enoyl reductase; part of the gene cluster that mediates the biosynthesis of the mycotoxins phomacins, leucine-derived cytochalasans with potent actin polymerization-inhibitory activities and monocot-specific antigerminative activities. The first step in the pathway is catalyzed by the hybrid PKS-NRPS phmA, assisted by the enoyl reductase phmE, that are responsible for fusion of the leucine precursor and the polyketide backbone to produce a 2-pyrrolidone intermediate. The polyketide synthase module (PKS) of phmA is responsible for the synthesis of the polyketide backbone and the downstream nonribosomal peptide synthetase (NRPS) amidates the carboxyl end of the polyketide with the leucine precursor. Because phmA lacks a designated enoylreductase (ER) domain, the required activity is provided the enoyl reductase phmE. Reduction by the hydrolyase phmG, followed by dehydration and intra-molecular Diels-Alder cyclization by the Diels-Alderase phmD then yield the required isoindolone-fused macrocycle. A number of oxidative steps catalyzed by the tailoring cytochrome P450 monooxygenase phmB, the FAD-linked oxidoreductase phmC and the short-chain dehydrogenase/reductase phmF, are further required to afford the final products, phomacin D and phomacin E. The polypeptide is Trans-enoyl reductase phmE (Phaeosphaeria nodorum (strain SN15 / ATCC MYA-4574 / FGSC 10173) (Glume blotch fungus)).